The following is a 156-amino-acid chain: Cytochrome c-type biogenesis protein CcmE 2 (156 aa).

Residues 1–8 (MNPQRRRR) are Cytoplasmic-facing. Residues 9-29 (LWLVLALVLAGGLATTLVAMA) form a helical; Signal-anchor for type II membrane protein membrane-spanning segment. Topologically, residues 30–156 (LQRNVAYLYT…AAAGQVGERQ (127 aa)) are periplasmic. Residues H123 and Y127 each contribute to the heme site. Positions 136-156 (MGSAHRKHDVPAAAGQVGERQ) are disordered.

This sequence belongs to the CcmE/CycJ family.

Its subcellular location is the cell inner membrane. In terms of biological role, heme chaperone required for the biogenesis of c-type cytochromes. Transiently binds heme delivered by CcmC and transfers the heme to apo-cytochromes in a process facilitated by CcmF and CcmH. This Xanthomonas axonopodis pv. citri (strain 306) protein is Cytochrome c-type biogenesis protein CcmE 2.